A 211-amino-acid chain; its full sequence is Glycerol-3-phosphate acyltransferase 2 (211 aa).

The next 5 membrane-spanning stretches (helical) occupy residues 6–26 (FASL…VVVG), 57–77 (IIVF…PVIF), 82–102 (HYLC…PIFL), 124–144 (FFLI…MVSL), and 148–168 (ISVV…LSII).

It belongs to the PlsY family. In terms of assembly, probably interacts with PlsX.

The protein resides in the cell membrane. It carries out the reaction an acyl phosphate + sn-glycerol 3-phosphate = a 1-acyl-sn-glycero-3-phosphate + phosphate. Its pathway is lipid metabolism; phospholipid metabolism. Its function is as follows. Catalyzes the transfer of an acyl group from acyl-phosphate (acyl-PO(4)) to glycerol-3-phosphate (G3P) to form lysophosphatidic acid (LPA). This enzyme utilizes acyl-phosphate as fatty acyl donor, but not acyl-CoA or acyl-ACP. The protein is Glycerol-3-phosphate acyltransferase 2 of Lactobacillus acidophilus (strain ATCC 700396 / NCK56 / N2 / NCFM).